The following is a 404-amino-acid chain: tRNA (carboxymethyluridine(34)-5-O)-methyltransferase (404 aa).

Serine 238 is modified (phosphoserine).

In terms of assembly, interacts with TRM112A and TRM112B.

It carries out the reaction 5-(carboxymethyl)uridine(34) in tRNA + S-adenosyl-L-methionine = 5-(2-methoxy-2-oxoethyl)uridine(34) in tRNA + S-adenosyl-L-homocysteine. Functionally, catalyzes the methylation of 5-carboxymethyl uridine to 5-methylcarboxymethyl uridine at the wobble position of the anticodon loop in tRNA via its methyltransferase domain. Catalyzes the last step in the formation of 5-methylcarboxymethyl uridine at the wobble position of the anticodon loop in target tRNA. In Arabidopsis thaliana (Mouse-ear cress), this protein is tRNA (carboxymethyluridine(34)-5-O)-methyltransferase.